Here is a 446-residue protein sequence, read N- to C-terminus: Glutamyl-tRNA reductase (446 aa).

Residues 49-52 (TCNR), Ser108, 113-115 (ETQ), and Gln119 contribute to the substrate site. The Nucleophile role is filled by Cys50. An NADP(+)-binding site is contributed by 188–193 (GAGKMS).

The protein belongs to the glutamyl-tRNA reductase family. Homodimer.

It carries out the reaction (S)-4-amino-5-oxopentanoate + tRNA(Glu) + NADP(+) = L-glutamyl-tRNA(Glu) + NADPH + H(+). Its pathway is porphyrin-containing compound metabolism; protoporphyrin-IX biosynthesis; 5-aminolevulinate from L-glutamyl-tRNA(Glu): step 1/2. Catalyzes the NADPH-dependent reduction of glutamyl-tRNA(Glu) to glutamate 1-semialdehyde (GSA). This is Glutamyl-tRNA reductase from Desulforudis audaxviator (strain MP104C).